A 924-amino-acid chain; its full sequence is MMMENGLSMEYGDGYMEQEEEWEREGLLDPAWEKQQKKTFTAWCNSHLRKAGTAIDNIEEDFRNGLKLMLLLEVISGETLPKPDRGKMRFHKIANVNKALDFIASKGVHLVSIGAEEIVDGNLKMTLGMIWTIILRFAIQDISVEEMTAKEGLLLWCQRKTAPYKNVNVQNFHLSFKDGLAFCALIHRHRPDLIDYAKLSKDNPLENLNTAFDVAEKYLDIPRMLDPDDLINTPKPDERAIMTYVSCYYHAFQGAQQVGNNTALPDERAVMTYVSSYYHCFSGAQKAETAANRICKVLKVNQENERLMEEYERLASDLLEWIRRTMPWLNSRQADNSLAGVQKKLEEYRTYRRKHKPPRVEQKAKLETNFNTLQTKLRLSNRPAYLPTEGKTVSDISNSWKGLELAEKAFEEWLLAETMRLERLEHLAQKFKHKADAHEDWTRGKEEMLQSQDFRQCKLNELKALKKKHEAFESDLAAHQDRVEQIAAIAQELNTLEYHDCVSVNARCQRICDQWDRLGALTQRRRTALDEAERILEKIDILHLEFAKRAAPFNNWLDGTREDLVDMFIVHTMEEIQGLIQAHDQFKATLGEADKEFNLIVNLVREVESIVKQHQIPGGLENPYTTLTANDMTRKWSDVRQLVPQRDQTLANELRKQQNNEMLRRQFAEKANIVGPWIERQMDAVTAIGMGLQGSLEDQLHRLKEYEQAVYAYKPNIEELEKIHQAVQESMIFENRYTNYTMETLRVGWEQLLTSINRNINEVENQILTRDSKGISQEQLNEFRSSFNHFDKNRTGRLSPEEFKSCLVSLGYSIGKDRQGDLDFQRILAVVDPNNTGYVHFDAFLDFMTRESTDTDTAEQVIDSFRILAADKPYILPDELRRELPPDQAEYCIQRMPPYKGPNGVPGALDYMSFSTALYGETDL.

Positions Met1–His250 are actin-binding. 2 Calponin-homology (CH) domains span residues Lys34–Ala138 and Met147–Gln253. Spectrin repeat units follow at residues Ala251 to Asp395, Ile396 to Arg510, Ile511 to Asp631, and Met632 to Thr744. 2 consecutive EF-hand domains span residues Glu778–Ser813 and Gln819–Asp854. Ca(2+) is bound by residues Asp791, Asn793, Thr795, Arg797, and Glu802.

It belongs to the alpha-actinin family. In terms of assembly, homodimer; antiparallel. Interacts with Smn; the interaction occurs in adult thoracic tissues. As to expression, larval muscle isoform is expressed in the larval body wall, adult muscles of the head and abdomen and supercontractile muscles of the larva and adult. Adult muscle isoform accumulates within adult fibrillar and tubular muscles.

The protein resides in the cytoplasm. It is found in the myofibril. Its subcellular location is the sarcomere. It localises to the z line. F-actin cross-linking protein which is thought to anchor actin to a variety of intracellular structures. This is a bundling protein. The chain is Alpha-actinin, sarcomeric (Actn) from Drosophila melanogaster (Fruit fly).